The chain runs to 565 residues: Fusion glycoprotein F0 (565 aa).

The signal sequence occupies residues 1 to 25; the sequence is MTAYIQRSQCISTSLLVVLTTLVSC. Over 26–500 the chain is Extracellular; the sequence is QIPRDRLSNI…VGRWYNSRET (475 aa). Cys-70 and Cys-199 are disulfide-bonded. Asn-104 carries N-linked (GlcNAc...) asparagine; by host glycosylation. The fusion peptide stretch occupies residues 117–141; the sequence is FFGAVIGTIALGVATSAQITAGIAL. Residues 142 to 170 are a coiled coil; that stretch reads AEAREAKRDIALIKESMTKTHKSVELLQN. The N-linked (GlcNAc...) asparagine; by host glycan is linked to Asn-245. The segment at 278-306 is leucine-zipper; the sequence is LERYMVTLSVKIPILSEVPGVLIHKASSI. 3 cysteine pairs are disulfide-bonded: Cys-338-Cys-347, Cys-362-Cys-370, and Cys-401-Cys-424. Asn-449 is a glycosylation site (N-linked (GlcNAc...) asparagine; by host). The stretch at 466-491 forms a coiled coil; it reads NLADATNFLQDSKAELEKARKILSEV. A helical membrane pass occupies residues 501–521; the sequence is VITIIVVMVVILVVIIVIVIV. The Cytoplasmic portion of the chain corresponds to 522 to 565; sequence LYRLKRSMLMGNPDERIPRDTYTLEPKIRHMYTNGGFDAMAEKR.

The protein belongs to the paramyxoviruses fusion glycoprotein family. Homotrimer of disulfide-linked F1-F2. Interacts with HN and M proteins. Post-translationally, in natural infection, inactive F0 is matured into F1 and F2 outside the cell by one or more trypsin-like, arginine-specific endoprotease secreted by the bronchial epithelial cells. One identified protease that may be involved in this process is tryptase Clara. Unlike most paramyxoviruses, Sendai F0 processing occurs on the cell surface and induces a conformational change in the protein that unmasks the fusion peptide. F0 maturation is a primary determinant for organ tropism and pathogenicity. F1 and F2 display interchain and intrachain disulfide bonds, that are necessary for correct folding and intracellular transport. In terms of processing, N-glycosylated; glycans consist of a mixture of high mannose-type oligosaccharides and of complex-type oligosaccharides. Glycosylation at Asn-245 is essential for membrane localization and F0 cleavage.

Its subcellular location is the virion membrane. The protein resides in the host cell membrane. In terms of biological role, class I viral fusion protein. Under the current model, the protein has at least 3 conformational states: pre-fusion native state, pre-hairpin intermediate state, and post-fusion hairpin state. During viral and plasma cell membrane fusion, the heptad repeat (HR) regions assume a trimer-of-hairpins structure, positioning the fusion peptide in close proximity to the C-terminal region of the ectodomain. The formation of this structure appears to drive apposition and subsequent fusion of viral and plasma cell membranes. Directs fusion of viral and cellular membranes leading to delivery of the nucleocapsid into the cytoplasm. This fusion is pH independent and occurs directly at the outer cell membrane. The trimer of F1-F2 (F protein) interacts with HN tetramer at the virion surface. Upon HN binding to its cellular receptor, the hydrophobic fusion peptide is unmasked and interacts with the cellular membrane, inducing the fusion between cell and virion membranes. Later in infection, F proteins expressed at the plasma membrane of infected cells could mediate fusion with adjacent cells to form syncytia, a cytopathic effect that could lead to tissue necrosis. The protein is Fusion glycoprotein F0 (F) of Cavia cutleri (Guinea pig).